The sequence spans 185 residues: Pericyclase pydY (185 aa).

The protein belongs to the pericyclase pydY family.

It participates in mycotoxin biosynthesis. Pericyclase; part of the gene cluster that mediates the biosynthesis of pyrrocidines, fungal natural products containing a macrocyclic para-cyclophane connected to a decahydrofluorene ring system that show potent antibiotic activities toward Gram-negative bacteria. Within the pathway, pydY is involved in the late Diels-Alder cycloaddition step that leads to the formation of the decahydrofluorene core. The pathway begins with the PKS-NRPS pydA which, with the help of the trans-enoyl reductase pydC, synthesizes the polyketide-tyrosyl acyl thioester product which can be reductively off-loaded by the terminal reductase (R) domain in pydA. The alpha/beta hydrolase pydG is then required to catalyze the subsequent Knoevenagel condensation that affords the 3-pyrrolin-2-one ring, whereas the four proteins pydB, pydE, pydX and pydZ then function synergistically to form the cyclophane. PydB and the membrane-bound pydX and pydZ are lipid-binding proteins that can sequester and mold the pdyG product into the inverse S-shape. Binding of the medium chain reductase pydE to the complex would trigger the cascade oxidative cyclization. PydY is involved in the Diels-Alder cycloaddition that forms the decahydrofluorene core. Additional non-enzymatic hydroxylation yields pyrrocidine A2 which can be further reduced into pyrrocidine B by an endogenous reductase. The sequence is that of Pericyclase pydY from Acremonium sp.